A 305-amino-acid polypeptide reads, in one-letter code: Putative ABC transporter molybdenum-binding protein HVO_B0369 (305 aa).

The segment at residues 1–40 (MNPDSAAGRSSRRAFLAAVGGVAAGGLTATAGCLGRGEEA) is a signal peptide (tat-type signal).

This sequence belongs to the bacterial solute-binding protein 1 family. WtpA subfamily. In terms of assembly, the complex is composed of two ATP-binding proteins, two transmembrane proteins (HVO_B0370) and a solute-binding protein (HVO_B0369). Post-translationally, predicted to be exported by the Tat system. The position of the signal peptide cleavage has not been experimentally proven.

In terms of biological role, part of an ABC transporter complex involved in molybdenum import. In Haloferax volcanii (strain ATCC 29605 / DSM 3757 / JCM 8879 / NBRC 14742 / NCIMB 2012 / VKM B-1768 / DS2) (Halobacterium volcanii), this protein is Putative ABC transporter molybdenum-binding protein HVO_B0369.